Reading from the N-terminus, the 593-residue chain is Elongation factor 4 (593 aa).

Residues 2-181 (DKIRNFCIIA…AVIERIPHPQ (180 aa)) enclose the tr-type G domain. GTP contacts are provided by residues 14-19 (DHGKST) and 128-131 (NKCD).

This sequence belongs to the TRAFAC class translation factor GTPase superfamily. Classic translation factor GTPase family. LepA subfamily.

Its subcellular location is the cell inner membrane. It catalyses the reaction GTP + H2O = GDP + phosphate + H(+). Its function is as follows. Required for accurate and efficient protein synthesis under certain stress conditions. May act as a fidelity factor of the translation reaction, by catalyzing a one-codon backward translocation of tRNAs on improperly translocated ribosomes. Back-translocation proceeds from a post-translocation (POST) complex to a pre-translocation (PRE) complex, thus giving elongation factor G a second chance to translocate the tRNAs correctly. Binds to ribosomes in a GTP-dependent manner. The protein is Elongation factor 4 of Bacteroides fragilis (strain ATCC 25285 / DSM 2151 / CCUG 4856 / JCM 11019 / LMG 10263 / NCTC 9343 / Onslow / VPI 2553 / EN-2).